A 349-amino-acid polypeptide reads, in one-letter code: NADH-quinone oxidoreductase subunit H (349 aa).

The next 8 helical transmembrane spans lie at 14 to 34 (LLVW…GCVA), 85 to 105 (GLFL…WAVI), 120 to 140 (LLYI…AGWA), 164 to 184 (MGFA…VDIV), 196 to 216 (ILSW…ISGV), 243 to 263 (GMAF…VAAL), 285 to 305 (AGGF…FLWF), and 324 to 344 (VFIP…FSPL).

This sequence belongs to the complex I subunit 1 family. In terms of assembly, NDH-1 is composed of 14 different subunits. Subunits NuoA, H, J, K, L, M, N constitute the membrane sector of the complex.

It is found in the cell inner membrane. It catalyses the reaction a quinone + NADH + 5 H(+)(in) = a quinol + NAD(+) + 4 H(+)(out). NDH-1 shuttles electrons from NADH, via FMN and iron-sulfur (Fe-S) centers, to quinones in the respiratory chain. The immediate electron acceptor for the enzyme in this species is believed to be ubiquinone. Couples the redox reaction to proton translocation (for every two electrons transferred, four hydrogen ions are translocated across the cytoplasmic membrane), and thus conserves the redox energy in a proton gradient. This subunit may bind ubiquinone. In Chromobacterium violaceum (strain ATCC 12472 / DSM 30191 / JCM 1249 / CCUG 213 / NBRC 12614 / NCIMB 9131 / NCTC 9757 / MK), this protein is NADH-quinone oxidoreductase subunit H.